Here is a 546-residue protein sequence, read N- to C-terminus: Intermembrane transport protein PqiB (546 aa).

At 1–15 (MESNNGEAKIQKVKN) the chain is on the cytoplasmic side. A helical membrane pass occupies residues 16 to 36 (WSPVWIFPIVTALIGAWVLFY). At 37–546 (HYSHQGPEVT…KDPEPKRAKQ (510 aa)) the chain is on the periplasmic side. MCE/MlaD stretches follow at residues 42-133 (GPEV…LQPG), 158-217 (IRVI…NNVR), and 285-389 (HIDY…LDFY). Residues 437 to 464 (IEQATSTLSESQRTMKNLQTTLDSMNKI) are a coiled coil.

This sequence belongs to the PqiB family. As to quaternary structure, homohexamer. May form a complex composed of PqiA, PqiB and PqiC. Interacts with PqiC.

The protein localises to the cell inner membrane. In terms of biological role, forms a tunnel that spans the entire periplasmic space. Could be implicated in lipid transport between the inner membrane and the outer membrane. Binds phospholipids. Required for outer membrane homeostasis. Contributes to membrane integrity. The chain is Intermembrane transport protein PqiB from Escherichia coli (strain K12).